Consider the following 574-residue polypeptide: PI-PLC X domain-containing protein DDB_G0269228 (574 aa).

Positions 1–42 (MFSSIMFKKKPKQNLNENEITSQSTTTTSTLSDSKPSEKKIK) are disordered. Low complexity predominate over residues 21 to 34 (TSQSTTTTSTLSDS). The PI-PLC X-box domain maps to 270 to 449 (GIKSSSLRVP…LKKRIINDDG (180 aa)).

This chain is PI-PLC X domain-containing protein DDB_G0269228, found in Dictyostelium discoideum (Social amoeba).